Reading from the N-terminus, the 162-residue chain is Transcription elongation factor GreA (162 aa).

Positions 46–77 form a coiled coil; the sequence is RENAEYKAAREEQTRLNNMVTRLQEEIERAQV.

Belongs to the GreA/GreB family.

Necessary for efficient RNA polymerase transcription elongation past template-encoded arresting sites. The arresting sites in DNA have the property of trapping a certain fraction of elongating RNA polymerases that pass through, resulting in locked ternary complexes. Cleavage of the nascent transcript by cleavage factors such as GreA or GreB allows the resumption of elongation from the new 3'terminus. GreA releases sequences of 2 to 3 nucleotides. The protein is Transcription elongation factor GreA of Treponema pallidum (strain Nichols).